The following is a 554-amino-acid chain: Glypican-1 (554 aa).

Residues 1-21 (MERLCWGWWWHLGILCLMHWA) form the signal peptide. Cystine bridges form between Cys-32–Cys-68, Cys-62–Cys-256, Cys-69–Cys-259, Cys-191–Cys-343, Cys-246–Cys-279, Cys-268–Cys-415, and Cys-272–Cys-401. N-linked (GlcNAc...) asparagine glycosylation is found at Asn-79 and Asn-116. Residues 346 to 369 (PKKTNKGSKSEERRRKGKATQEDK) form a disordered region. The segment covering 353 to 369 (SKSEERRRKGKATQEDK) has biased composition (basic and acidic residues). Residues Ser-486, Ser-488, and Ser-490 are each glycosylated (O-linked (Xyl...) (heparan sulfate) serine).

It belongs to the glypican family. In terms of processing, O-glycosylated with heparan sulfate side chains.

It localises to the cell membrane. It is found in the secreted. Its subcellular location is the extracellular space. Cell surface proteoglycan that bears heparan sulfate. This is Glypican-1 (gpc1) from Xenopus tropicalis (Western clawed frog).